Consider the following 284-residue polypeptide: Pheromone-regulated membrane protein 4 (284 aa).

Residues 20–38 (IISLTLVLLGVFSFLLLTW) form a helical membrane-spanning segment. The Glutaredoxin domain occupies 157–272 (RTDFLDIIRT…PLLKSEARGN (116 aa)).

It is found in the membrane. The sequence is that of Pheromone-regulated membrane protein 4 (PRM4) from Saccharomyces cerevisiae (strain ATCC 204508 / S288c) (Baker's yeast).